Reading from the N-terminus, the 437-residue chain is Transcription factor ets-4 (437 aa).

The tract at residues 1 to 30 (MNGTGSVGHRWNSLSPEPHSGTESTASTPF) is disordered. Residues 21-30 (GTESTASTPF) are compositionally biased toward polar residues. A Glycyl lysine isopeptide (Lys-Gly) (interchain with G-Cter in SUMO) cross-link involves residue K32. Phosphoserine is present on S73. Residue K83 forms a Glycyl lysine isopeptide (Lys-Gly) (interchain with G-Cter in SUMO) linkage. The region spanning 120–202 (HLIQDISTTC…AQLQVWKTGT (83 aa)) is the PNT domain. Residues 275 to 302 (QGTVLPSPSNSDTSSNGSSQDMNDDDID) are disordered. The segment covering 280-293 (PSPSNSDTSSNGSS) has biased composition (low complexity). The segment at residues 349 to 432 (VHLWQFIREL…KKQRLVYKFL (84 aa)) is a DNA-binding region (ETS).

The protein belongs to the ETS family. In terms of assembly, may interact with cebp-1. May interact with tdpt-1 to facilitate its sumoylation. In terms of processing, phosphorylation is required for axon regeneration. Post-translationally, sumoylated; sumoylation inhibits phosphorylation, which is required for probable interaction with cebp-1 and consequently the expression of svh-2. In terms of tissue distribution, expressed in cells of the anterior and posterior bulbs of the pharynx, seam cells, a few unidentified cells of the vulva, the hypodermis, several unidentified neurons, labial socket cells of the head and rectal cells.

The protein localises to the nucleus. Transcription factor which binds to 5'-GGAA/T-3' DNA consensus sequences. Both positively and negatively regulates the expression of target genes. Plays a role in the regulation of adult lifespan, which may in part be through modulation of daf-16 activity. Regulates the expression of genes such as svh-2 in response to axon injury and in addition, may function downstream of the cAMP signaling pathway to promote axon regeneration. Regulates the expression of lipid metabolism genes and may also control the expression of the RNA-binding protein rege-1 which too has been implicated in the control of fat accumulation. This chain is Transcription factor ets-4, found in Caenorhabditis elegans.